The primary structure comprises 467 residues: DNA polymerase IV (467 aa).

The region spanning 5–187 is the UmuC domain; it reads VLHIDMDAFF…LPVGALWGVG (183 aa). Positions 9 and 104 each coordinate Mg(2+). Glutamate 105 is a catalytic residue. Disordered regions lie at residues 364 to 383 and 429 to 449; these read PDTDYEVGVQSSSSSESTQV and KGRTKSFSMDDPDLTPADPLD.

It belongs to the DNA polymerase type-Y family. Monomer. Mg(2+) serves as cofactor.

The protein resides in the cytoplasm. The catalysed reaction is DNA(n) + a 2'-deoxyribonucleoside 5'-triphosphate = DNA(n+1) + diphosphate. In terms of biological role, poorly processive, error-prone DNA polymerase involved in untargeted mutagenesis. Copies undamaged DNA at stalled replication forks, which arise in vivo from mismatched or misaligned primer ends. These misaligned primers can be extended by PolIV. Exhibits no 3'-5' exonuclease (proofreading) activity. May be involved in translesional synthesis, in conjunction with the beta clamp from PolIII. This chain is DNA polymerase IV, found in Corynebacterium glutamicum (strain ATCC 13032 / DSM 20300 / JCM 1318 / BCRC 11384 / CCUG 27702 / LMG 3730 / NBRC 12168 / NCIMB 10025 / NRRL B-2784 / 534).